A 904-amino-acid polypeptide reads, in one-letter code: MNEYRSSLVFATPDLPLRDDVRRLGALVGDLLAEQVSAEFLDEIERVRTTAISRRESDAPPSTLSEQLTGREPRDAEALVRAFSTYFQVVNIAERVHRIRRRREYQRSGTDTPQPDGLHDALRRLKAQGVTLDELSQWLPRIDVEPVFTAHPTEAVRRALLEKEQLMVASLVDNLDGMRTPNERTSDAARFRMALTASWQTADSSPVRPTVGDEREHVGFYLTQVLYRVIPVMYETLEHAIEETYGSVPALPRLLRFGTWVGGDMDGNPNVDANTIAGTLDAQRRAVLDRYQKELWQLASLLSQSTTLVQVSPELMTQLERYRALLPDAAARSRPRHGDMPYRLLNDLMRARLQATLDDADGAYTAPSELEDDLQLILDSLQANKGLHAGWFAVRRLLWRVRSFGFHLARLDVRQESSVHARAVADALGQTDWDAQDATRRAAVLGPYACGQEALPRVQDEGNARLDAVFAALADARTRHGADALGSYIISMAHNRADVLTVLALARRGGLVDAAGAVPLDIVPLFETVDDLRGGTGTVQDLLADPVYRQHLAARGDTQMVMLGYSDSGKDGGIAASRWGLQRAQVELLEAAADLGVRLTFFHGRGGSIARGGGKTSRALDAAPRGSVDGRLRVTEQGEVIHRKYGIRALALRSLEQMTGAVLLSSLRPRAPEPREARWRPVMDLVAERSTVAYRAFVAAPEFMQYFRLATPIDVIERMTLGSRPSRRLGQDAALSNLRAIPWVFAWSQARAVIPGWYGVGSGLQAAVDAGHEDSLREMAQDWPFFRTFLDDVAMVLSKGDLNIAELFSRLSGDLHTRFFPLIRDELALTKGWVKALLQQQSLLQHDPRLALSIRLRNPYIDPISVLQVDLLQRWRATDGEDEALLRALVACVNGVSQGLQNTG.

Residues 52 to 71 form a disordered region; sequence ISRRESDAPPSTLSEQLTGR. Residues histidine 151 and lysine 570 contribute to the active site.

This sequence belongs to the PEPCase type 1 family. Mg(2+) is required as a cofactor.

It carries out the reaction oxaloacetate + phosphate = phosphoenolpyruvate + hydrogencarbonate. Forms oxaloacetate, a four-carbon dicarboxylic acid source for the tricarboxylic acid cycle. The polypeptide is Phosphoenolpyruvate carboxylase (Xanthomonas oryzae pv. oryzae (strain MAFF 311018)).